The following is an 844-amino-acid chain: Putative ubiquitin thioesterase 232R (844 aa).

Disordered regions lie at residues 136–223, 261–287, 326–377, and 422–541; these read NSST…DEAE, SRRK…PPME, LLNG…PELT, and QKKQ…KLSV. Over residues 137–216 the composition is skewed to low complexity; sequence SSTRSRSPSV…PSRQSVRQSS (80 aa). 2 stretches are compositionally biased toward low complexity: residues 332-341 and 354-364; these read RPSPSLPQSR and RSPSVGSPSVR. The segment covering 429 to 438 has biased composition (pro residues); the sequence is SPSPTPPSPV. Residues 472–485 are compositionally biased toward basic and acidic residues; the sequence is VQKKMGKSGEREPK. A compositionally biased stretch (low complexity) spans 504–518; it reads SLRSRLSTQQQTQQS. Basic and acidic residues predominate over residues 526–535; it reads ESIKPEESVR. Residues 590 to 725 form the OTU domain; sequence YTVKQVSGDG…NYHYTSLVPI (136 aa). Asp598 is a catalytic residue. The Nucleophile role is filled by Cys601. The active site involves His718.

The catalysed reaction is Thiol-dependent hydrolysis of ester, thioester, amide, peptide and isopeptide bonds formed by the C-terminal Gly of ubiquitin (a 76-residue protein attached to proteins as an intracellular targeting signal).. In terms of biological role, hydrolase that can remove conjugated ubiquitin from proteins and may therefore play an important regulatory role at the level of protein turnover by preventing degradation. This Aedes vexans (Inland floodwater mosquito) protein is Putative ubiquitin thioesterase 232R.